We begin with the raw amino-acid sequence, 205 residues long: ATP synthase subunit b (205 aa).

A helical membrane pass occupies residues leucine 45 to leucine 65.

It belongs to the ATPase B chain family. F-type ATPases have 2 components, F(1) - the catalytic core - and F(0) - the membrane proton channel. F(1) has five subunits: alpha(3), beta(3), gamma(1), delta(1), epsilon(1). F(0) has three main subunits: a(1), b(2) and c(10-14). The alpha and beta chains form an alternating ring which encloses part of the gamma chain. F(1) is attached to F(0) by a central stalk formed by the gamma and epsilon chains, while a peripheral stalk is formed by the delta and b chains.

The protein localises to the cell inner membrane. In terms of biological role, f(1)F(0) ATP synthase produces ATP from ADP in the presence of a proton or sodium gradient. F-type ATPases consist of two structural domains, F(1) containing the extramembraneous catalytic core and F(0) containing the membrane proton channel, linked together by a central stalk and a peripheral stalk. During catalysis, ATP synthesis in the catalytic domain of F(1) is coupled via a rotary mechanism of the central stalk subunits to proton translocation. Its function is as follows. Component of the F(0) channel, it forms part of the peripheral stalk, linking F(1) to F(0). The sequence is that of ATP synthase subunit b from Rhizorhabdus wittichii (strain DSM 6014 / CCUG 31198 / JCM 15750 / NBRC 105917 / EY 4224 / RW1) (Sphingomonas wittichii).